The sequence spans 1024 residues: Gamma-tubulin complex component 5 (1024 aa).

Disordered stretches follow at residues 153–203, 523–545, and 853–873; these read IGLG…GGPQ, NEDK…SSRQ, and SQAK…GPPK. The span at 189–198 shows a compositional bias: basic and acidic residues; sequence TPLEEQDHNR. The span at 529 to 543 shows a compositional bias: low complexity; it reads DSASASSGSDQGPSS. Positions 853 to 864 are enriched in basic and acidic residues; it reads SQAKEDIPRDQD.

Belongs to the TUBGCP family. Component of the gamma-tubulin ring complex (gTuRC) consisting of TUBGCP2, TUBGCP3, TUBGCP4, TUBGCP5 and TUBGCP6 and gamma-tubulin TUBG1 or TUBG2. TUBGCP2, TUBGCP3, TUBGCP4, TUBGCP5 and TUBGCP6 assemble in a 5:5:2:1:1 stoichiometry; each is associated with a gamma-tubulin, thereby arranging 14 gamma-tubulins in a helical manner. Gamma-tubulin at the first position is blocked by TUBGCP3 at the last position, allowing 13 protafilaments to grow into a microtubule. The gTuRC (via TUBGCP3 and TUBGCP6) interacts with ACTB and MZT1; the interactions form a luminal bridge that stabilizes the initial structure during complex assembly. The gTuRC (via TUBGCP2) interacts with MZT2A/MZT2B and CDK5RAP2 (via CM1 motif); the interactions play a role in gTuRC activation.

The protein localises to the cytoplasm. It is found in the cytoskeleton. It localises to the microtubule organizing center. The protein resides in the centrosome. Its function is as follows. Component of the gamma-tubulin ring complex (gTuRC) which mediates microtubule nucleation. The gTuRC regulates the minus-end nucleation of alpha-beta tubulin heterodimers that grow into microtubule protafilaments, a critical step in centrosome duplication and spindle formation. This Mus musculus (Mouse) protein is Gamma-tubulin complex component 5 (Tubgcp5).